Here is a 148-residue protein sequence, read N- to C-terminus: Large ribosomal subunit protein bL9 (148 aa).

This sequence belongs to the bacterial ribosomal protein bL9 family.

Its function is as follows. Binds to the 23S rRNA. This is Large ribosomal subunit protein bL9 from Solibacter usitatus (strain Ellin6076).